Consider the following 250-residue polypeptide: Myelin basic protein (250 aa).

Residues 1–28 (MGNHSGKRELSAEKASKDGEIHRGEAGK) show a composition bias toward basic and acidic residues. Positions 1–150 (MGNHSGKREL…SQRSKYLATA (150 aa)) are disordered. Position 2 is an N-acetylalanine (G2). S31 and S40 each carry phosphoserine. Residues 95–113 (FSRDAPGREDNTFKDRPSE) show a composition bias toward basic and acidic residues. S96 bears the Phosphothreonine mark. E113 is subject to Phosphoserine. Position 122 is a phosphothreonine (E122). T125 carries the post-translational modification Phosphotyrosine. A phosphoserine mark is found at A135, R139, S141, and S144. Phosphotyrosine occurs at positions 146 and 147. T149 is subject to Phosphothreonine. Position 151 is a phosphoserine (S151). At S151 the chain carries Phosphotyrosine. T152 bears the Phosphothreonine mark. A citrulline mark is found at R157 and R163. T167 carries the phosphothreonine modification. At S172 the chain carries Phosphoserine. Omega-N-methylarginine is present on residues R175 and R181. Residues 175–250 (RFFSGDRGAP…SRSGSPMARR (76 aa)) form a disordered region. Phosphoserine is present on S188. T197 is modified (phosphothreonine). The span at 197–206 (THYGSLPQKS) shows a compositional bias: polar residues. Y199 is modified (phosphotyrosine). Position 206 is a phosphoserine (S206). Residues T211, T226, and T229 each carry the phosphothreonine modification. A Deamidated glutamine modification is found at Q234. A Citrulline modification is found at R239. Phosphoserine is present on S241. S245 bears the Phosphoserine; by UHMK1 mark. Position 250 is a citrulline (R250).

It belongs to the myelin basic protein family. In terms of assembly, homodimer. As in other animals, several charge isomers may be produced as a result of optional post-translational modifications, such as phosphorylation of serine or threonine residues, deamidation of glutamine or asparagine residues, citrullination and methylation of arginine residues. In terms of processing, methylated on arginine residues; decreases with the age of the animal, making MBP more cationic. Post-translationally, phosphorylated by TAOK2, VRK2, MAPK11, MAPK12, MAPK14 and MINK1. Proteolytically cleaved in B cell lysosomes by cathepsin CTSG which degrades the major immunogenic MBP epitope and prevents the activation of MBP-specific autoreactive T cells. As to expression, in the embryo, isoform 1-isoform 3 are found in neurons within the central nervous system (primarily in pioneer neurons important in the formation of the cortex) and the peripheral nervous system. They are also expressed in the thymus, gut, lung and kidney. In the adult, isoform 1-isoform 3 are highly expressed in the brain (mainly in brain regions rich in oligodendrocytes) and spleen. Lower levels are seen in the heart, kidney and lung. Isoform 2 is also found in cells of the immune system. The isoforms missing the 134 first amino acids (isoform 4-isoform 13) are almost exclusively produced in the myelin-forming cells, the mature oligodendrocytes.

It localises to the myelin membrane. The protein resides in the cytoplasm. It is found in the nucleus. The classic group of MBP isoforms (isoform 4-isoform 13) are with PLP the most abundant protein components of the myelin membrane in the CNS. They have a role in both its formation and stabilization. The non-classic group of MBP isoforms (isoform 1-isoform 3/Golli-MBPs) may preferentially have a role in the early developing brain long before myelination, maybe as components of transcriptional complexes, and may also be involved in signaling pathways in T-cells and neural cells. Differential splicing events combined to optional post-translational modifications give a wide spectrum of isomers, with each of them potentially having a specialized function. In Mus musculus (Mouse), this protein is Myelin basic protein (Mbp).